Consider the following 218-residue polypeptide: Putative NAD(P)H nitroreductase SH0546 (218 aa).

The protein belongs to the nitroreductase family. FMN is required as a cofactor.

This chain is Putative NAD(P)H nitroreductase SH0546, found in Staphylococcus haemolyticus (strain JCSC1435).